The chain runs to 536 residues: Probable protein S-acyltransferase 23 (536 aa).

Residues 1 to 23 are disordered; that stretch reads MDSSEIEVVPLDSNSHQSPTESP. Residues 12–23 are compositionally biased toward polar residues; sequence DSNSHQSPTESP. ANK repeat units lie at residues 57 to 86, 90 to 119, 123 to 153, 157 to 186, 190 to 219, and 225 to 254; these read NGFYALQWAALNNSLHVAQYIIQHGGDVNS, IQQTPLHWAAVKGSIDVADLLLQHGARIEA, NGFRAVHVASQYGQTAFVNHIIVDYAADYNA, EGRSPLHWAAYNGFTETVRLLLFRDACQNR, TGCTPLHWAVIKENVEACTLLVHAGTKEEL, and TGSTPLKLASDKGHRQLALFLSKAMRTRKN. 2 consecutive transmembrane segments (helical) span residues 270-290 and 298-318; these read YAPMLFSLIVILMVLFITSIV and ITAMVGLWACFGLSCGVYALI. The DHHC domain maps to 363-413; that stretch reads QLCPTCKIIRPVRSKHCPTCKRCVEQFDHHCPWISNCVGKKNKRYFLVFVI. Cys-393 acts as the S-palmitoyl cysteine intermediate in catalysis. The next 2 helical transmembrane spans lie at 407–427 and 454–474; these read YFLVFVIMGALTSFVGGTTAV and AAVFLFFDLLIFIATMTLTIS.

Belongs to the DHHC palmitoyltransferase family. Expressed in roots, shoots, flowers and pollen.

Its subcellular location is the golgi apparatus membrane. The enzyme catalyses L-cysteinyl-[protein] + hexadecanoyl-CoA = S-hexadecanoyl-L-cysteinyl-[protein] + CoA. In terms of biological role, palmitoyl acyltransferase. The chain is Probable protein S-acyltransferase 23 (PAT23) from Arabidopsis thaliana (Mouse-ear cress).